The sequence spans 282 residues: MRIDTVNVLLEALPYIKEFYGKTFVIKFGGSAMKQENAKKAFIQDIILLKYTGIKPIIVHGGGPAISQMMKDLGIEPVFKNGHRVTDEKTMEIVEMVLVGKINKEIVMNLNLHGGRAVGICGKDSKLIVAEKETKHGDIGYVGKVKKVNPEILHALIENDYIPVIAPVGIGEDGHSYNINADTAAAEIAKSLMAEKLILLTDVDGVLKGDKLISTLTPDEAEELIRDGTVTGGMIPKVECAVSAVRGGVGAVHIINGGLEHAILLEIFSRKGIGTMIKELEG.

Residues 62-63, R84, and N178 contribute to the substrate site; that span reads GG.

The protein belongs to the acetylglutamate kinase family. ArgB subfamily.

The protein localises to the cytoplasm. It carries out the reaction N-acetyl-L-glutamate + ATP = N-acetyl-L-glutamyl 5-phosphate + ADP. The protein operates within amino-acid biosynthesis; L-arginine biosynthesis; N(2)-acetyl-L-ornithine from L-glutamate: step 2/4. Catalyzes the ATP-dependent phosphorylation of N-acetyl-L-glutamate. In Thermotoga sp. (strain RQ2), this protein is Acetylglutamate kinase.